A 162-amino-acid chain; its full sequence is Regulator of sigma D (162 aa).

This sequence belongs to the Rsd/AlgQ family. Interacts with RpoD.

Its subcellular location is the cytoplasm. Binds RpoD and negatively regulates RpoD-mediated transcription activation by preventing the interaction between the primary sigma factor RpoD with the catalytic core of the RNA polymerase and with promoter DNA. May be involved in replacement of the RNA polymerase sigma subunit from RpoD to RpoS during the transition from exponential growth to the stationary phase. This chain is Regulator of sigma D, found in Salmonella paratyphi A (strain ATCC 9150 / SARB42).